Reading from the N-terminus, the 463-residue chain is ATP-dependent protease ATPase subunit HslU (463 aa).

ATP is bound by residues isoleucine 19 and 61–66; that span reads GVGKTE. The tract at residues 154-175 is disordered; the sequence is FGGNQNSNQTSDAQEDDEIEKK. Polar residues predominate over residues 156-165; the sequence is GNQNSNQTSD. Residues aspartate 277, glutamate 341, and arginine 413 each contribute to the ATP site.

It belongs to the ClpX chaperone family. HslU subfamily. In terms of assembly, a double ring-shaped homohexamer of HslV is capped on each side by a ring-shaped HslU homohexamer. The assembly of the HslU/HslV complex is dependent on binding of ATP.

The protein resides in the cytoplasm. ATPase subunit of a proteasome-like degradation complex; this subunit has chaperone activity. The binding of ATP and its subsequent hydrolysis by HslU are essential for unfolding of protein substrates subsequently hydrolyzed by HslV. HslU recognizes the N-terminal part of its protein substrates and unfolds these before they are guided to HslV for hydrolysis. The sequence is that of ATP-dependent protease ATPase subunit HslU from Bacillus mycoides (strain KBAB4) (Bacillus weihenstephanensis).